Consider the following 257-residue polypeptide: MLAKRIVPCLDVRDGKVVKGVQFRNHEIVGDIVPLAARYAAESADELVFYDITASAHDRVVDKSWVSRVAEQIDIPFCVAGGIKSIEQAREKLAFGADKISINSPALSDPGLIDRLQDEFGRQCIVIGIDSYYDADTDSYKVKQFTGDEAATKDTQWYTQDWVEEVQRRGCGEIVLNVMNQDGVRQGYDIKQLAMVRAICDVPLIASGGAGTMEHFLEVFTQAGVDAALAASVFHKGIIEIEALKRYLLDNGVQMRL.

Residues Asp11 and Asp130 contribute to the active site.

It belongs to the HisA/HisF family. In terms of assembly, heterodimer of HisH and HisF.

It is found in the cytoplasm. It carries out the reaction 5-[(5-phospho-1-deoxy-D-ribulos-1-ylimino)methylamino]-1-(5-phospho-beta-D-ribosyl)imidazole-4-carboxamide + L-glutamine = D-erythro-1-(imidazol-4-yl)glycerol 3-phosphate + 5-amino-1-(5-phospho-beta-D-ribosyl)imidazole-4-carboxamide + L-glutamate + H(+). It participates in amino-acid biosynthesis; L-histidine biosynthesis; L-histidine from 5-phospho-alpha-D-ribose 1-diphosphate: step 5/9. In terms of biological role, IGPS catalyzes the conversion of PRFAR and glutamine to IGP, AICAR and glutamate. The HisF subunit catalyzes the cyclization activity that produces IGP and AICAR from PRFAR using the ammonia provided by the HisH subunit. This chain is Imidazole glycerol phosphate synthase subunit HisF, found in Shewanella loihica (strain ATCC BAA-1088 / PV-4).